Here is a 387-residue protein sequence, read N- to C-terminus: Succinate--CoA ligase [ADP-forming] subunit beta (387 aa).

The ATP-grasp domain occupies 9-245 (KDLLESYGLK…KSQENAKELK (237 aa)). ATP is bound by residues lysine 46, 53–55 (GRG), glutamate 100, tyrosine 103, and glutamate 108. Mg(2+) is bound by residues asparagine 200 and aspartate 214. Residues asparagine 265 and 322–324 (GIV) contribute to the substrate site.

This sequence belongs to the succinate/malate CoA ligase beta subunit family. As to quaternary structure, heterotetramer of two alpha and two beta subunits. Mg(2+) serves as cofactor.

It catalyses the reaction succinate + ATP + CoA = succinyl-CoA + ADP + phosphate. It carries out the reaction GTP + succinate + CoA = succinyl-CoA + GDP + phosphate. The protein operates within carbohydrate metabolism; tricarboxylic acid cycle; succinate from succinyl-CoA (ligase route): step 1/1. Functionally, succinyl-CoA synthetase functions in the citric acid cycle (TCA), coupling the hydrolysis of succinyl-CoA to the synthesis of either ATP or GTP and thus represents the only step of substrate-level phosphorylation in the TCA. The beta subunit provides nucleotide specificity of the enzyme and binds the substrate succinate, while the binding sites for coenzyme A and phosphate are found in the alpha subunit. This Francisella tularensis subsp. tularensis (strain WY96-3418) protein is Succinate--CoA ligase [ADP-forming] subunit beta.